Consider the following 890-residue polypeptide: Translation initiation factor IF-2 (890 aa).

A disordered region spans residues 45-304 (LIDHLNQKNS…LQQGFQKPAQ (260 aa)). Residues 67–81 (STLNIPGTGGKSKSV) are compositionally biased toward polar residues. Positions 92–217 (VKRDPQEAER…RMAEENKWTD (126 aa)) are enriched in basic and acidic residues. The segment covering 252–266 (GRGRNAKAARPKKGN) has biased composition (basic residues). Residues 267-280 (KHAESKADREEARA) show a composition bias toward basic and acidic residues. Positions 389 to 558 (PRAPVVTIMG…LLQAEVLELK (170 aa)) constitute a tr-type G domain. Residues 398 to 405 (GHVDHGKT) form a G1 region. 398–405 (GHVDHGKT) contacts GTP. Residues 423-427 (GITQH) are G2. Residues 444–447 (DTPG) are G3. Residues 444-448 (DTPGH) and 498-501 (NKID) contribute to the GTP site. The tract at residues 498-501 (NKID) is G4. The tract at residues 534–536 (SAK) is G5. At Lys-808 the chain carries N6-acetyllysine.

The protein belongs to the TRAFAC class translation factor GTPase superfamily. Classic translation factor GTPase family. IF-2 subfamily.

It is found in the cytoplasm. One of the essential components for the initiation of protein synthesis. Protects formylmethionyl-tRNA from spontaneous hydrolysis and promotes its binding to the 30S ribosomal subunits. Also involved in the hydrolysis of GTP during the formation of the 70S ribosomal complex. The sequence is that of Translation initiation factor IF-2 from Escherichia coli (strain SMS-3-5 / SECEC).